Consider the following 415-residue polypeptide: N-succinylarginine dihydrolase (415 aa).

Substrate is bound by residues 18 to 27, Asn100, and 127 to 128; these read AGLSRGNIAS and HR. The active site involves Glu161. Arg193 provides a ligand contact to substrate. Residue His229 is part of the active site. 2 residues coordinate substrate: Asp231 and Asn340. Catalysis depends on Cys346, which acts as the Nucleophile.

This sequence belongs to the succinylarginine dihydrolase family. Homodimer.

It carries out the reaction N(2)-succinyl-L-arginine + 2 H2O + 2 H(+) = N(2)-succinyl-L-ornithine + 2 NH4(+) + CO2. It functions in the pathway amino-acid degradation; L-arginine degradation via AST pathway; L-glutamate and succinate from L-arginine: step 2/5. Functionally, catalyzes the hydrolysis of N(2)-succinylarginine into N(2)-succinylornithine, ammonia and CO(2). This Sphingopyxis alaskensis (strain DSM 13593 / LMG 18877 / RB2256) (Sphingomonas alaskensis) protein is N-succinylarginine dihydrolase.